An 84-amino-acid polypeptide reads, in one-letter code: Small ribosomal subunit protein bS18A (84 aa).

This sequence belongs to the bacterial ribosomal protein bS18 family. As to quaternary structure, part of the 30S ribosomal subunit. Forms a tight heterodimer with protein bS6.

Binds as a heterodimer with protein bS6 to the central domain of the 16S rRNA, where it helps stabilize the platform of the 30S subunit. In Mycolicibacterium paratuberculosis (strain ATCC BAA-968 / K-10) (Mycobacterium paratuberculosis), this protein is Small ribosomal subunit protein bS18A.